The sequence spans 495 residues: Autoinducer 2 import ATP-binding protein LsrA (495 aa).

ABC transporter domains follow at residues 5-233 (IEAH…TPVS) and 256-494 (AQDF…FGGQ). Residue 37–44 (GGNGAGKS) participates in ATP binding.

It belongs to the ABC transporter superfamily. AI-2 autoinducer porter (TC 3.A.1.2.8) family. The complex is composed of two ATP-binding proteins (LsrA), two transmembrane proteins (LsrC and LsrD) and a solute-binding protein (LsrB).

The protein localises to the cell inner membrane. The enzyme catalyses ATP + H2O + (2R,4S)-2-methyl-2,3,3,4-tetrahydroxytetrahydrofuran-[AI-2-binding protein]Side 1 = ADP + phosphate + (2R,4S)-2-methyl-2,3,3,4-tetrahydroxytetrahydrofuranSide 2 + [AI-2-binding protein]Side 1.. Its function is as follows. Part of the ABC transporter complex LsrABCD involved in autoinducer 2 (AI-2) import. Responsible for energy coupling to the transport system. This is Autoinducer 2 import ATP-binding protein LsrA (lsrA) from Enterobacter sp. (strain 638).